Consider the following 1142-residue polypeptide: Desmoglein-2.1 (1142 aa).

A signal peptide spans 1 to 18; the sequence is MARRISPVVAFLLCFGLS. Positions 19–38 are excised as a propeptide; it reads HFFEAEARLQHSVALHRQKR. Residues 39–643 lie on the Extracellular side of the membrane; it reads EWIVPPQILE…AKKGSRLGPA (605 aa). Cadherin domains are found at residues 64–148, 156–258, 259–416, and 417–527; these read SDKE…APVF, VDEL…VPTL, GGPY…GPKF, and FPGT…CPTL. A glycan (N-linked (GlcNAc...) asparagine) is linked at Asn115. Residues 369-389 form a disordered region; the sequence is SGAAGGAGAMGGASGSGGGTG. Asn490 and Asn576 each carry an N-linked (GlcNAc...) asparagine glycan. Residues 644-664 traverse the membrane as a helical segment; it reads GIGLLLLALLALLLIPLLLLL. Residues 665 to 1142 are Cytoplasmic-facing; sequence CTCGMTGAFT…RKVVTTQSVK (478 aa). Desmoglein repeat repeat units lie at residues 948-974, 975-998, 999-1039, and 1040-1071; these read VEQQ…NSGP, VAEG…ERMV, LVFR…VLQG, and TIQR…NGIS.

It is found in the cell junction. Its subcellular location is the desmosome. The protein resides in the cell membrane. The protein localises to the cytoplasm. A component of desmosome cell-cell junctions which are required for positive regulation of cellular adhesion. Involved in the interaction of plaque proteins and intermediate filaments mediating cell-cell adhesion. Required for embryogenesis, specifically for progression of epiboly and normal convergence-extension movements during gastrulation. The protein is Desmoglein-2.1 of Danio rerio (Zebrafish).